Here is a 341-residue protein sequence, read N- to C-terminus: L-threonine 3-dehydrogenase (341 aa).

C38 contributes to the Zn(2+) binding site. Catalysis depends on charge relay system residues T40 and H43. Zn(2+)-binding residues include H63, E64, C93, C96, C99, and C107. Residues I175, D195, R200, 262–264, and 286–287 each bind NAD(+); these read LGI and IY.

The protein belongs to the zinc-containing alcohol dehydrogenase family. Homotetramer. It depends on Zn(2+) as a cofactor.

It localises to the cytoplasm. It carries out the reaction L-threonine + NAD(+) = (2S)-2-amino-3-oxobutanoate + NADH + H(+). It functions in the pathway amino-acid degradation; L-threonine degradation via oxydo-reductase pathway; glycine from L-threonine: step 1/2. In terms of biological role, catalyzes the NAD(+)-dependent oxidation of L-threonine to 2-amino-3-ketobutyrate. The polypeptide is L-threonine 3-dehydrogenase (Marinomonas sp. (strain MWYL1)).